A 344-amino-acid chain; its full sequence is Acetylpolyamine amidohydrolase 2 (344 aa).

H159 acts as the Proton donor/acceptor in catalysis. Residues D195, H197, and D284 each contribute to the Zn(2+) site.

This sequence belongs to the histone deacetylase family. Homodimer. Zn(2+) serves as cofactor.

The catalysed reaction is N-acetylputrescine + H2O = putrescine + acetate. The enzyme catalyses N-acetylcadaverine + H2O = cadaverine + acetate. The protein operates within amine and polyamine metabolism. Functionally, catalyzes the deacetylation of acetylated polyamines such as N-acetylputrescine and N-acetylcadaverine. Plays an important role in the metabolism of acetylated polyamines in P.aeruginosa. Is involved in the degradation pathways of N-acetylputrescine and N-acetylcadaverine, that allow P.aeruginosa to utilize these acetylpolyamines as a carbon source under glucose starvation. Shows nearly no activity against N(1)-acetylspermine and N(1)-acetylspermidine. Can also hydrolyze artificial trifluoroacetylated lysine-derivative, and to a lesser extent, acetylated lysine-derivative. The polypeptide is Acetylpolyamine amidohydrolase 2 (Pseudomonas aeruginosa (strain ATCC 15692 / DSM 22644 / CIP 104116 / JCM 14847 / LMG 12228 / 1C / PRS 101 / PAO1)).